We begin with the raw amino-acid sequence, 149 residues long: Phosphoribosyl-AMP cyclohydrolase (149 aa).

Position 92 (D92) interacts with Mg(2+). C93 lines the Zn(2+) pocket. The Mg(2+) site is built by D94 and D96. Residues C111 and C118 each contribute to the Zn(2+) site.

Belongs to the PRA-CH family. As to quaternary structure, homodimer. Mg(2+) serves as cofactor. The cofactor is Zn(2+).

The protein resides in the cytoplasm. It carries out the reaction 1-(5-phospho-beta-D-ribosyl)-5'-AMP + H2O = 1-(5-phospho-beta-D-ribosyl)-5-[(5-phospho-beta-D-ribosylamino)methylideneamino]imidazole-4-carboxamide. It functions in the pathway amino-acid biosynthesis; L-histidine biosynthesis; L-histidine from 5-phospho-alpha-D-ribose 1-diphosphate: step 3/9. Catalyzes the hydrolysis of the adenine ring of phosphoribosyl-AMP. The chain is Phosphoribosyl-AMP cyclohydrolase from Rhizobium rhizogenes (strain K84 / ATCC BAA-868) (Agrobacterium radiobacter).